The sequence spans 203 residues: Endo-type membrane-bound lytic murein transglycosylase A (203 aa).

A signal peptide spans 1 to 15 (MKLRWFAFLVVLLAG). Cys16 carries the N-palmitoyl cysteine lipid modification. A lipid anchor (S-diacylglycerol cysteine) is attached at Cys16.

This sequence belongs to the transglycosylase Slt family.

Its subcellular location is the cell outer membrane. The enzyme catalyses Endolytic cleavage of the (1-&gt;4)-beta-glycosidic linkage between N-acetylmuramic acid (MurNAc) and N-acetylglucosamine (GlcNAc) residues in peptidoglycan with concomitant formation of a 1,6-anhydrobond in the MurNAc residue.. Its function is as follows. Murein-degrading enzyme. May play a role in recycling of muropeptides during cell elongation and/or cell division. Preferentially cleaves at a distance of more than two disaccharide units from the ends of the glycan chain. The sequence is that of Endo-type membrane-bound lytic murein transglycosylase A from Citrobacter koseri (strain ATCC BAA-895 / CDC 4225-83 / SGSC4696).